Consider the following 629-residue polypeptide: Probable potassium transport system protein Kup 3 (629 aa).

The next 12 helical transmembrane spans lie at 20–40, 61–81, 106–126, 143–163, 171–191, 209–229, 253–273, 291–311, 343–363, 372–392, 400–420, and 425–445; these read LSLS…LYTF, VSLI…HFAL, PFII…GTIT, PSLK…LFAI, IGKA…ILGA, GLSF…GVFL, WFGL…ALVL, FLLP…QAII, IYIG…TIGF, AYGI…FIAL, IITS…FFAA, and FING…MMYI.

The protein belongs to the HAK/KUP transporter (TC 2.A.72) family.

It is found in the cell inner membrane. The enzyme catalyses K(+)(in) + H(+)(in) = K(+)(out) + H(+)(out). Its function is as follows. Transport of potassium into the cell. Likely operates as a K(+):H(+) symporter. This chain is Probable potassium transport system protein Kup 3, found in Legionella pneumophila subsp. pneumophila (strain Philadelphia 1 / ATCC 33152 / DSM 7513).